The sequence spans 935 residues: MSDYKDTLNLPKTSFSMKGNLANKEPMILNKWEKQGIYKKIREHFAGREKFVLHDGPPYANGSIHVGHAVNKILKDIIVKSKTLSGYDAPYIPTWDCHGLPIELQVEKKHGKAGQKISEDAFRKECRKYAKQQVEIQKKDFKRLGVLGQWDQPYLTMDFSYEANMIRTLAKIIENKHLTKGFKPVHWCTDCGSALAEAEVEYKDKISPAIDVKFKIKDKEKLAKAFGLESLNHDAFAIIWTTTPWTLPANQAIAVNNQLNYSLVKIEDFYIILAENLVEQTLKRYAIENAQVIANTSGYKLIGIIAEHPFYSRHVPILHGDHVTDDSGTGMVHTAPTHGVEDFTLGKEHDLSMEIFVKGNGCYSENTKLFAGEFVFKANDRVIELLGEKKRLMNFDKLKHSYPHCWRHKTPLIFRATPQWFISMEKEGLREKAIEAIKETSWAPSWGQARIEGMIKDRPDWCISRQRTWGVPLPLFIHKETEELHPNTIEILHKVAQKIEKGGIEAWFNADDNEFIAETDKYKRVKDTLDVWFDSGSSSMCILDIDKSLSYPADLYLEGSDQHRGWFQTSLLVAMSAKGNQPYKEVFTHGFVVDEHGRKMSKSLGNVTSPQDIYNTLGADILRLWTASTDYKSEMAVSDQILKRTADTYRRLRNTARFLLSNLEGFNPETDIIEFDKLVKLDQWAIAKTKEFQDKIIEAYDKYQTHTVAQLIHHFCSIEMGSFYLDIIKDRQYTAKADGHPRKSAQTAIYHIVHALVRWMAPILSYTADEIWEATPKTTDLPIQLCEWYTDLKSFNDQDELNLEFWAKIQEIRSEVNRILEIKRNEEVIKASLEAEIIIYADNDNYKLLEKLGNELRFLLISSKASLRAIEEKTNNSIESNITGLNIEVNKIEEPKCERCWHRSATVGQNEEYQDICSRCVENITTEAGESREFA.

A 'HIGH' region motif is present at residues Pro-58–His-68. Glu-558 contacts L-isoleucyl-5'-AMP. The short motif at Lys-599 to Ser-603 is the 'KMSKS' region element. Position 602 (Lys-602) interacts with ATP. 4 residues coordinate Zn(2+): Cys-897, Cys-900, Cys-917, and Cys-920.

This sequence belongs to the class-I aminoacyl-tRNA synthetase family. IleS type 1 subfamily. Monomer. The cofactor is Zn(2+).

It is found in the cytoplasm. It carries out the reaction tRNA(Ile) + L-isoleucine + ATP = L-isoleucyl-tRNA(Ile) + AMP + diphosphate. In terms of biological role, catalyzes the attachment of isoleucine to tRNA(Ile). As IleRS can inadvertently accommodate and process structurally similar amino acids such as valine, to avoid such errors it has two additional distinct tRNA(Ile)-dependent editing activities. One activity is designated as 'pretransfer' editing and involves the hydrolysis of activated Val-AMP. The other activity is designated 'posttransfer' editing and involves deacylation of mischarged Val-tRNA(Ile). In Francisella philomiragia subsp. philomiragia (strain ATCC 25017 / CCUG 19701 / FSC 153 / O#319-036), this protein is Isoleucine--tRNA ligase.